A 518-amino-acid chain; its full sequence is Glutamate--cysteine ligase (518 aa).

This sequence belongs to the glutamate--cysteine ligase type 1 family. Type 1 subfamily.

The catalysed reaction is L-cysteine + L-glutamate + ATP = gamma-L-glutamyl-L-cysteine + ADP + phosphate + H(+). It participates in sulfur metabolism; glutathione biosynthesis; glutathione from L-cysteine and L-glutamate: step 1/2. In Buchnera aphidicola subsp. Acyrthosiphon pisum (strain APS) (Acyrthosiphon pisum symbiotic bacterium), this protein is Glutamate--cysteine ligase (gshA).